Here is a 104-residue protein sequence, read N- to C-terminus: Large ribosomal subunit protein uL24 (104 aa).

The protein belongs to the universal ribosomal protein uL24 family. As to quaternary structure, part of the 50S ribosomal subunit.

Its function is as follows. One of two assembly initiator proteins, it binds directly to the 5'-end of the 23S rRNA, where it nucleates assembly of the 50S subunit. In terms of biological role, one of the proteins that surrounds the polypeptide exit tunnel on the outside of the subunit. The sequence is that of Large ribosomal subunit protein uL24 from Pseudomonas fluorescens (strain ATCC BAA-477 / NRRL B-23932 / Pf-5).